A 579-amino-acid polypeptide reads, in one-letter code: UPF0329 protein ECU06_1620 (579 aa).

2 disordered regions span residues 325–360 and 370–389; these read EEKA…GEEA and ARRK…KIHK. The segment covering 329-338 has biased composition (basic residues); it reads KGRKDGKKKS. The span at 345–360 shows a compositional bias: acidic residues; that stretch reads KEEESETEEVEAGEEA.

This sequence belongs to the UPF0329 family.

The polypeptide is UPF0329 protein ECU06_1620 (Encephalitozoon cuniculi (strain GB-M1) (Microsporidian parasite)).